The chain runs to 141 residues: MSRTIMAFDFGTKSIGSAIGQEITGTASPLKAFKANDGIPNWDDIEKQIKEWQPDLLVVGLPTDLHGKDLETITPRAKKFAKRLQGRYGLPVELHDERLSTSEARAELFSMGGYKALSKGNIDCQSAVVILESWFEALWGE.

Belongs to the YqgF nuclease family.

The protein resides in the cytoplasm. Functionally, could be a nuclease involved in processing of the 5'-end of pre-16S rRNA. In Vibrio parahaemolyticus serotype O3:K6 (strain RIMD 2210633), this protein is Putative pre-16S rRNA nuclease.